Reading from the N-terminus, the 341-residue chain is Phosphate acyltransferase (341 aa).

It belongs to the PlsX family. As to quaternary structure, homodimer. Probably interacts with PlsY.

The protein localises to the cytoplasm. The enzyme catalyses a fatty acyl-[ACP] + phosphate = an acyl phosphate + holo-[ACP]. The protein operates within lipid metabolism; phospholipid metabolism. In terms of biological role, catalyzes the reversible formation of acyl-phosphate (acyl-PO(4)) from acyl-[acyl-carrier-protein] (acyl-ACP). This enzyme utilizes acyl-ACP as fatty acyl donor, but not acyl-CoA. This is Phosphate acyltransferase from Saccharophagus degradans (strain 2-40 / ATCC 43961 / DSM 17024).